Reading from the N-terminus, the 351-residue chain is Anthranilate phosphoribosyltransferase (351 aa).

Residues Gly80, 83-84 (GD), Thr88, 90-93 (NIST), 108-116 (KHGNRSVTS), and Ser120 each bind 5-phospho-alpha-D-ribose 1-diphosphate. Residue Gly80 participates in anthranilate binding. Ser92 serves as a coordination point for Mg(2+). Residue Asn111 participates in anthranilate binding. Anthranilate is bound at residue Arg166. Mg(2+) is bound by residues Asp229 and Glu230.

This sequence belongs to the anthranilate phosphoribosyltransferase family. In terms of assembly, homodimer. Mg(2+) is required as a cofactor.

It carries out the reaction N-(5-phospho-beta-D-ribosyl)anthranilate + diphosphate = 5-phospho-alpha-D-ribose 1-diphosphate + anthranilate. Its pathway is amino-acid biosynthesis; L-tryptophan biosynthesis; L-tryptophan from chorismate: step 2/5. Functionally, catalyzes the transfer of the phosphoribosyl group of 5-phosphorylribose-1-pyrophosphate (PRPP) to anthranilate to yield N-(5'-phosphoribosyl)-anthranilate (PRA). The sequence is that of Anthranilate phosphoribosyltransferase from Chlorobium chlorochromatii (strain CaD3).